A 338-amino-acid polypeptide reads, in one-letter code: UDP-3-O-acylglucosamine N-acyltransferase (338 aa).

H239 (proton acceptor) is an active-site residue.

Belongs to the transferase hexapeptide repeat family. LpxD subfamily. As to quaternary structure, homotrimer.

The enzyme catalyses a UDP-3-O-[(3R)-3-hydroxyacyl]-alpha-D-glucosamine + a (3R)-hydroxyacyl-[ACP] = a UDP-2-N,3-O-bis[(3R)-3-hydroxyacyl]-alpha-D-glucosamine + holo-[ACP] + H(+). Its pathway is bacterial outer membrane biogenesis; LPS lipid A biosynthesis. Catalyzes the N-acylation of UDP-3-O-acylglucosamine using 3-hydroxyacyl-ACP as the acyl donor. Is involved in the biosynthesis of lipid A, a phosphorylated glycolipid that anchors the lipopolysaccharide to the outer membrane of the cell. This Xylella fastidiosa (strain M23) protein is UDP-3-O-acylglucosamine N-acyltransferase.